Reading from the N-terminus, the 139-residue chain is Acidic phospholipase A2 S1E6-c (139 aa).

Positions 1-16 (MRTLWILAVLLVGVEG) are cleaved as a signal peptide. Cystine bridges form between cysteine 42/cysteine 132, cysteine 44/cysteine 60, cysteine 59/cysteine 111, cysteine 65/cysteine 139, cysteine 66/cysteine 104, cysteine 73/cysteine 97, and cysteine 91/cysteine 102. Positions 43, 45, and 47 each coordinate Ca(2+). The active site involves histidine 63. Position 64 (aspartate 64) interacts with Ca(2+). The active site involves aspartate 105.

The protein belongs to the phospholipase A2 family. Group II subfamily. D49 sub-subfamily. Homodimer. Ca(2+) is required as a cofactor. Expressed by the venom gland.

Its subcellular location is the secreted. It catalyses the reaction a 1,2-diacyl-sn-glycero-3-phosphocholine + H2O = a 1-acyl-sn-glycero-3-phosphocholine + a fatty acid + H(+). Its function is as follows. Snake venom phospholipase A2 (PLA2) that inhibits ADP-induced platelet aggregation. PLA2 catalyzes the calcium-dependent hydrolysis of the 2-acyl groups in 3-sn-phosphoglycerides. This is Acidic phospholipase A2 S1E6-c from Calloselasma rhodostoma (Malayan pit viper).